A 217-amino-acid polypeptide reads, in one-letter code: Coiled-coil domain-containing protein 124-A (217 aa).

The tract at residues 1–128 (MPKKFQGENT…HLEMPLEENV (128 aa)) is disordered. Composition is skewed to basic and acidic residues over residues 18–45 (RKAEAKAVSDGKRQKEIEDAYWQDDDKH), 52–74 (RKEDKEKKRLEQLERKKESQRLL), and 95–128 (TRAEIEETLCKEEEHKATTEKPKTHLEMPLEENV). Residues 46 to 82 (VARKGQRKEDKEKKRLEQLERKKESQRLLDEEDSKMK) adopt a coiled-coil conformation.

It belongs to the CCDC124 family. Associates with translationally inactive ribosomes in the nonrotated state.

The protein resides in the cytoplasm. The protein localises to the cytoskeleton. It is found in the microtubule organizing center. It localises to the centrosome. Its subcellular location is the midbody. Its function is as follows. Ribosome-binding protein involved in ribosome hibernation: associates with translationally inactive ribosomes and stabilizes the nonrotated conformation of the 80S ribosome, thereby promoting ribosome preservation and storage. The sequence is that of Coiled-coil domain-containing protein 124-A (ccdc124-a) from Xenopus laevis (African clawed frog).